Reading from the N-terminus, the 286-residue chain is Polyamine aminopropyltransferase (286 aa).

One can recognise a PABS domain in the interval 5–238 (TMWHETLHDQ…GIMTFAWATN (234 aa)). Gln33 serves as a coordination point for S-methyl-5'-thioadenosine. Spermidine-binding residues include His64 and Asp88. S-methyl-5'-thioadenosine is bound by residues Glu108 and 140–141 (DG). Residue Asp158 is the Proton acceptor of the active site. 158–161 (DCTD) is a spermidine binding site. Pro165 contributes to the S-methyl-5'-thioadenosine binding site.

This sequence belongs to the spermidine/spermine synthase family. In terms of assembly, homodimer or homotetramer.

The protein localises to the cytoplasm. It catalyses the reaction S-adenosyl 3-(methylsulfanyl)propylamine + putrescine = S-methyl-5'-thioadenosine + spermidine + H(+). It functions in the pathway amine and polyamine biosynthesis; spermidine biosynthesis; spermidine from putrescine: step 1/1. Functionally, catalyzes the irreversible transfer of a propylamine group from the amino donor S-adenosylmethioninamine (decarboxy-AdoMet) to putrescine (1,4-diaminobutane) to yield spermidine. The chain is Polyamine aminopropyltransferase from Salmonella paratyphi B (strain ATCC BAA-1250 / SPB7).